Consider the following 497-residue polypeptide: Pentatricopeptide repeat-containing protein At2g36240 (497 aa).

PPR repeat units lie at residues 156–186, 192–226, 227–261, 262–296, 297–331, 332–366, 367–401, 402–436, and 437–471; these read LEPIFRSAIDAYCRARKMDYALLAFDTMKRL, NVGVYNTVVNGYVKSGDMDKALRFYQRMGKERAKP, DVCTFNILINGYCRSSKFDLALDLFREMKEKGCEP, NVVSFNTLIRGFLSSGKIEEGVKMAYEMIELGCRF, SEATCEILVDGLCREGRVDDACGLVLDLLNKRVLP, SEFDYGSLVEKLCGENKAVRAMEMMEELWKKGQTP, CFIACTTLVEGLRKSGRTEKASGFMEKMMNAGILP, DSVTFNLLLRDLCSSDHSTDANRLRLLASSKGYEP, and DETTYHVLVSGFTKEGRRKEGEVLVNEMLDKDMLP.

Belongs to the PPR family. P subfamily.

The polypeptide is Pentatricopeptide repeat-containing protein At2g36240 (Arabidopsis thaliana (Mouse-ear cress)).